Here is a 512-residue protein sequence, read N- to C-terminus: Keratin, type I cytoskeletal 24 (512 aa).

The segment at 1 to 21 (MFCSAQKGSCSSRVSSSGAVG) is disordered. The tract at residues 1–140 (MFCSAQKGSC…GYDGGLLSGS (140 aa)) is head. Positions 8-21 (GSCSSRVSSSGAVG) are enriched in low complexity. Residues 141 to 176 (EKQTMQDLNDRLANYLDKVRALEEANTDLECKIKDW) form a coil 1A region. The IF rod domain occupies 141 to 455 (EKQTMQDLND…RLLNGDGGGC (315 aa)). The linker 1 stretch occupies residues 177 to 197 (YGKHGSVKGGSGRDYSQYYSI). The interval 198-289 (IEDLKKQILS…KNHEEEMKCM (92 aa)) is coil 1B. A linker 12 region spans residues 290–312 (QGSSGGDVTVEMNAAPGVDLTKL). Residues 313 to 451 (LNDMRAQYEA…ETYRRLLNGD (139 aa)) are coil 2. Residues 452 to 512 (GGGCDYRNLV…VSNISEVKIK (61 aa)) are tail.

The protein belongs to the intermediate filament family. Heterotetramer of two type I and two type II keratins.

This is Keratin, type I cytoskeletal 24 (Krt24) from Mus musculus (Mouse).